The primary structure comprises 98 residues: UPF0235 protein azo3464 (98 aa).

The protein belongs to the UPF0235 family.

In Azoarcus sp. (strain BH72), this protein is UPF0235 protein azo3464.